The following is a 3241-amino-acid chain: PHD finger protein rhinoceros (3241 aa).

Residues methionine 1 to histidine 16 show a composition bias toward basic residues. Positions methionine 1–alanine 126 are disordered. 2 stretches are compositionally biased toward low complexity: residues proline 42 to threonine 55 and arginine 90 to alanine 126. Residues asparagine 312–glycine 362 form a PHD-type 1 zinc finger. The C2HC pre-PHD-type zinc finger occupies lysine 364–valine 398. The PHD-type 2 zinc-finger motif lies at leucine 422 to serine 481. Disordered stretches follow at residues methionine 482 to alanine 501, asparagine 508 to glutamine 554, serine 737 to proline 1266, proline 1279 to valine 1483, proline 1500 to arginine 1613, and asparagine 1632 to leucine 1746. A compositionally biased stretch (basic and acidic residues) spans lysine 540–glutamine 554. Residues lysine 762–glutamate 777 show a composition bias toward polar residues. Residues lysine 807–valine 874 show a composition bias toward low complexity. A compositionally biased stretch (basic and acidic residues) spans glutamate 931–alanine 943. Polar residues predominate over residues glutamine 949–threonine 965. Over residues aspartate 995–glutamate 1007 the composition is skewed to acidic residues. Positions serine 1019–alanine 1031 are enriched in low complexity. Over residues threonine 1060 to arginine 1075 the composition is skewed to polar residues. Residues threonine 1087 to alanine 1104 are compositionally biased toward low complexity. 2 stretches are compositionally biased toward polar residues: residues isoleucine 1117–asparagine 1126 and asparagine 1151–proline 1163. Residues lysine 1184 to glutamine 1211 are compositionally biased toward basic and acidic residues. Over residues valine 1313–alanine 1327 the composition is skewed to polar residues. A Phosphothreonine modification is found at threonine 1346. Serine 1352 is modified (phosphoserine). The residue at position 1364 (threonine 1364) is a Phosphothreonine. A compositionally biased stretch (low complexity) spans serine 1382–proline 1426. Threonine 1456 bears the Phosphothreonine mark. Positions asparagine 1463 to valine 1483 are enriched in polar residues. Over residues serine 1541–lysine 1558 the composition is skewed to basic and acidic residues. Residues lysine 1576 to histidine 1594 are compositionally biased toward polar residues. Residues threonine 1599 to proline 1608 are compositionally biased toward pro residues. Residues threonine 1664–alanine 1675 show a composition bias toward polar residues. A compositionally biased stretch (pro residues) spans proline 1688–threonine 1699. A compositionally biased stretch (basic residues) spans arginine 1717 to serine 1731. Coiled-coil stretches lie at residues histidine 1741 to tyrosine 1770 and serine 1893 to valine 1925. 11 disordered regions span residues leucine 2037–alanine 2061, alanine 2124–threonine 2148, asparagine 2203–asparagine 2227, threonine 2346–threonine 2454, alanine 2598–asparagine 2629, serine 2667–glutamine 2691, asparagine 2768–serine 2811, glycine 2832–glutamate 2911, asparagine 2964–methionine 3015, lysine 3042–methionine 3169, and valine 3184–arginine 3241. Over residues lysine 2359–glutamine 2381 the composition is skewed to polar residues. Pro residues predominate over residues proline 2392–valine 2402. Residues glycine 2430–arginine 2439 show a composition bias toward gly residues. Polar residues-rich tracts occupy residues alanine 2598–glycine 2611 and aspartate 2673–arginine 2689. A compositionally biased stretch (polar residues) spans asparagine 2855–alanine 2865. Positions lysine 2876 to alanine 2887 are enriched in basic and acidic residues. Phosphoserine is present on residues serine 2880 and serine 2881. A compositionally biased stretch (polar residues) spans alanine 2899 to glutamate 2911. Basic and acidic residues predominate over residues asparagine 2964–glutamate 2974. The span at lysine 2984–lysine 3002 shows a compositional bias: basic residues. Residues glutamine 3003–methionine 3015 show a composition bias toward low complexity. Phosphoserine occurs at positions 3104 and 3110. 2 stretches are compositionally biased toward polar residues: residues leucine 3115–proline 3130 and valine 3184–proline 3197. The segment covering serine 3198 to asparagine 3218 has biased composition (low complexity). Residues glycine 3219–glycine 3230 show a composition bias toward gly residues.

The protein belongs to the JADE family.

Its subcellular location is the nucleus. In terms of biological role, may function as a negative regulator of the EGFR/Ras/MAPK signaling pathway during eye development. This is PHD finger protein rhinoceros (rno) from Drosophila melanogaster (Fruit fly).